The sequence spans 474 residues: Aspartate ammonia-lyase (474 aa).

Threonine 105, serine 144, threonine 145, asparagine 146, and threonine 191 together coordinate L-aspartate. Residues 322 to 331 form an SS loop region; that stretch reads GSSIMPGKVN. Serine 323 acts as the Proton acceptor in catalysis. Positions 324 and 329 each coordinate L-aspartate.

Belongs to the class-II fumarase/aspartase family. Aspartase subfamily. Homotetramer.

The catalysed reaction is L-aspartate = fumarate + NH4(+). In terms of biological role, lyase involved in the degradation of canavanine, the delta-oxa-analog of arginine, allowing growth on canavanine as sole nitrogen and carbon source. Probably catalyzes the conversion of L-aspartate to fumarate and ammonia. The sequence is that of Aspartate ammonia-lyase from Pseudomonas canavaninivorans.